Consider the following 170-residue polypeptide: Probable calcium-binding protein CML27 (170 aa).

At Ala-2 the chain carries N-acetylalanine. EF-hand domains lie at 19–54, 55–85, 88–123, and 136–159; these read ANPEELKKVFDQFDSNGDGKISVLELGGVFKAMGTS, YTETELNRVLEEVDTDRDGYINLDEFSTLCR, SSAAEIRDAFDLYDQDKNGLISASELHQVLNRLGMS, and VDADGDGNVNFEEFQKMMTSSSLL. The Ca(2+) site is built by Asp-32, Asn-34, Asp-36, Lys-38, Glu-43, Asp-68, Asp-70, Asp-72, Tyr-74, Glu-79, Asp-101, Asp-103, Asn-105, Glu-112, Asp-137, Asp-139, Asp-141, Asn-143, and Glu-148.

In terms of biological role, potential calcium sensor. This is Probable calcium-binding protein CML27 (CML27) from Arabidopsis thaliana (Mouse-ear cress).